Consider the following 303-residue polypeptide: Nucleotide-binding protein USA300HOU_0794 (303 aa).

18–25 (GLSGAGKS) is an ATP binding site. 69 to 72 (DLRG) is a GTP binding site.

The protein belongs to the RapZ-like family.

Its function is as follows. Displays ATPase and GTPase activities. This Staphylococcus aureus (strain USA300 / TCH1516) protein is Nucleotide-binding protein USA300HOU_0794.